The primary structure comprises 974 residues: MSFLIRSICFLILIPSFLITFVSATQHLCHSDQKDALLDFKNEFGMVDSKSWVNKSDCCSWDGITCDAKSGNVIGLDLSSIFLYGQLKSNSSLFKLRHLRDLNLANNNFNNSPIPAEFDKLTGLERLDLSQSSLSGQIPINLLQLTKLVSLDLSSSDFFGDESFHYLSIDKSFLPLLARNLRNLRELDMSYVKISSEIPEEFSNIRSLRSLNLNGCNLFGEFPSSILLIPNLQSIDLGNNPNLRGNLPVFHENNSLLKLTILYTSFSGAIPDSISSLKNLTSLTLSVSYFSGKIPFSLGNLSHLSHLSLSSNNLIGEIPSSIGNLNQLTNFYVGGNKLSGNLPATLSNLTKLNTISLSSNQFTGSLPPSISQLSKLKFFFADDNPFIGAILSPLLKIPSLTRIHLSYNQLNDLVGIENIFMLPNLETFYIYHYNYTKVRPLDLNVFSSLKQLGTLYISRIPISTTNITSDFPSNLEYLSLRSCNITDFPEFIRKGRNLQILDLSNNKIKGQVPDWLWRMPTLNSVDLSNNSLSGFHVSVKASPESQLTSVDLSSNAFQGPLFLPSKSLRYFSGSNNNFTGKIPRSICGLSSLEILDLSNNNLNGSLPWCLETLMSSLSDLDLRNNSLSGSLPEIFMNATKLRSLDVSHNRMEGKLPGSLTGCSSLEVLNVGSNRINDMFPFELNSLQKLQVLVLHSNKFHGTLHNVDGVWFGFPQLQIIDVSHNDFFGILPSDYFMNWTAMSSKKDNNIEPEYIQNPSVYGSSLGYYTSLVLMSKGVSMEMERVLTIYTAIDLSGNQLHGKIPDSIGLLKELRILNMSSNGFTGHIPSSLANLKNLESLDISQNNISGEIPPELGTLSSLAWINVSHNQLVGSIPQGTQFQRQKCSSYEGNPGLNGPSLENVCGHIKESTPTQTEPLETKEEEEEESFSWIAAGLGFAPGVVFGLAMGYIVVSYKHQWFMKTFGRSKQQNTRTR.

The signal sequence occupies residues 1–24; it reads MSFLIRSICFLILIPSFLITFVSA. Topologically, residues 25-930 are extracellular; that stretch reads TQHLCHSDQK…EEEEEESFSW (906 aa). N-linked (GlcNAc...) asparagine glycosylation is found at Asn-54 and Asn-90. LRR repeat units lie at residues 96-120, 122-145, 147-166, 181-204, 206-229, and 230-252; these read LRHL…EFDK, TGLE…LLQL, KLVS…SFHY, LRNL…EFSN, RSLR…ILLI, and PNLQ…VFHE. The N-linked (GlcNAc...) asparagine glycan is linked to Asn-253. LRR repeat units follow at residues 254-277, 278-301, 302-325, 327-349, and 350-373; these read NSLL…ISSL, KNLT…LGNL, SHLS…IGNL, QLTN…LSNL, and TKLN…ISQL. Asn-279 and Asn-300 each carry an N-linked (GlcNAc...) asparagine glycan. N-linked (GlcNAc...) asparagine glycosylation occurs at Asn-348. The LRR 12; degenerate repeat unit spans residues 374–396; sequence SKLKFFFADDNPFIGAILSPLLK. LRR repeat units follow at residues 397-422, 425-448, 454-472, 473-495, 496-519, 521-542, 544-570, 572-589, 590-616, 618-638, 639-662, 664-685, 687-712, 713-737, 785-809, 810-833, 834-857, and 859-882; these read IPSL…IFML, LETF…VFSS, TLYI…SDFP, SNLE…IRKG, RNLQ…LWRM, TLNS…VKAS, ESQL…SLRY, SGSN…ICGL, SSLE…LMSS, SDLD…FMNA, TKLR…LTGC, SLEV…ELNS, QKLQ…VWFG, FPQL…YFMN, LTIY…IGLL, KELR…LANL, KNLE…LGTL, and SLAW…QFQR. N-linked (GlcNAc...) asparagine glycosylation is found at Asn-434, Asn-466, and Asn-484. Asn-529 carries an N-linked (GlcNAc...) asparagine glycan. 4 N-linked (GlcNAc...) asparagine glycosylation sites follow: Asn-577, Asn-603, Asn-624, and Asn-637. N-linked (GlcNAc...) asparagine glycosylation occurs at Asn-737. N-linked (GlcNAc...) asparagine glycans are attached at residues Asn-816, Asn-845, and Asn-864. The disordered stretch occupies residues 899 to 923; that stretch reads LENVCGHIKESTPTQTEPLETKEEE. A helical membrane pass occupies residues 931–951; the sequence is IAAGLGFAPGVVFGLAMGYIV. The Cytoplasmic portion of the chain corresponds to 952–974; that stretch reads VSYKHQWFMKTFGRSKQQNTRTR.

It belongs to the RLP family.

It localises to the cell membrane. The chain is Receptor-like protein 7 from Arabidopsis thaliana (Mouse-ear cress).